The chain runs to 178 residues: ATP synthase subunit delta (178 aa).

Belongs to the ATPase delta chain family. In terms of assembly, F-type ATPases have 2 components, F(1) - the catalytic core - and F(0) - the membrane proton channel. F(1) has five subunits: alpha(3), beta(3), gamma(1), delta(1), epsilon(1). F(0) has three main subunits: a(1), b(2) and c(10-14). The alpha and beta chains form an alternating ring which encloses part of the gamma chain. F(1) is attached to F(0) by a central stalk formed by the gamma and epsilon chains, while a peripheral stalk is formed by the delta and b chains.

The protein resides in the cell inner membrane. F(1)F(0) ATP synthase produces ATP from ADP in the presence of a proton or sodium gradient. F-type ATPases consist of two structural domains, F(1) containing the extramembraneous catalytic core and F(0) containing the membrane proton channel, linked together by a central stalk and a peripheral stalk. During catalysis, ATP synthesis in the catalytic domain of F(1) is coupled via a rotary mechanism of the central stalk subunits to proton translocation. Functionally, this protein is part of the stalk that links CF(0) to CF(1). It either transmits conformational changes from CF(0) to CF(1) or is implicated in proton conduction. This Hydrogenovibrio crunogenus (strain DSM 25203 / XCL-2) (Thiomicrospira crunogena) protein is ATP synthase subunit delta.